A 667-amino-acid polypeptide reads, in one-letter code: Probable oxidoreductase YyaE (667 aa).

One can recognise a 4Fe-4S Mo/W bis-MGD-type domain in the interval 2 to 59 (SKVHQSACPLNCWDSCGFLVTVDDGKVTKVDGDPNHPITEGKICGRGRMLETKTNSPD). Residues Cys9, Cys13, Cys17, and Cys45 each contribute to the [4Fe-4S] cluster site.

It belongs to the prokaryotic molybdopterin-containing oxidoreductase family. Mo-bis(molybdopterin guanine dinucleotide) serves as cofactor.

The sequence is that of Probable oxidoreductase YyaE (yyaE) from Bacillus subtilis (strain 168).